Consider the following 274-residue polypeptide: Putative pyruvate, phosphate dikinase regulatory protein 1 (274 aa).

149 to 156 (GISRTSKT) serves as a coordination point for ADP.

The protein belongs to the pyruvate, phosphate/water dikinase regulatory protein family. PDRP subfamily.

The enzyme catalyses N(tele)-phospho-L-histidyl/L-threonyl-[pyruvate, phosphate dikinase] + ADP = N(tele)-phospho-L-histidyl/O-phospho-L-threonyl-[pyruvate, phosphate dikinase] + AMP + H(+). It catalyses the reaction N(tele)-phospho-L-histidyl/O-phospho-L-threonyl-[pyruvate, phosphate dikinase] + phosphate + H(+) = N(tele)-phospho-L-histidyl/L-threonyl-[pyruvate, phosphate dikinase] + diphosphate. In terms of biological role, bifunctional serine/threonine kinase and phosphorylase involved in the regulation of the pyruvate, phosphate dikinase (PPDK) by catalyzing its phosphorylation/dephosphorylation. The sequence is that of Putative pyruvate, phosphate dikinase regulatory protein 1 from Listeria welshimeri serovar 6b (strain ATCC 35897 / DSM 20650 / CCUG 15529 / CIP 8149 / NCTC 11857 / SLCC 5334 / V8).